The chain runs to 133 residues: Profilin (133 aa).

It belongs to the profilin family.

More likely to influence phosphoinositide metabolism than actin assembly. In Vaccinia virus (strain Tian Tan) (VACV), this protein is Profilin.